We begin with the raw amino-acid sequence, 495 residues long: Nuclear receptor subfamily 6 group A member 1 (495 aa).

Residues 1 to 34 (MERDERPPSGGGGGGGSAGFLEPPAALPPPPRNG) form a disordered region. Residues 9 to 18 (SGGGGGGGSA) are compositionally biased toward gly residues. A DNA-binding region (nuclear receptor) is located at residues 72 to 147 (QRTCLICGDR…MGMNRKAIRE (76 aa)). C75, C78, C92, C95, C111, C117, C127, and C130 together coordinate Zn(2+). 2 NR C4-type zinc fingers span residues 75-95 (CLIC…CEGC) and 111-135 (CSRD…LLKC). 2 disordered regions span residues 145–165 (IRED…QISE) and 177–214 (FEEE…LSSS). Residues 180 to 192 (EANHWSNHGDSDH) are compositionally biased toward basic and acidic residues. The segment at 187 to 268 (HGDSDHSSPG…RSLDPQSYSL (82 aa)) is sufficient for interaction with UIMC1. Low complexity predominate over residues 202 to 214 (SNQPSPGSTLSSS). One can recognise an NR LBD domain in the interval 264–495 (QSYSLIHQLM…HSCKTSTVKE (232 aa)).

This sequence belongs to the nuclear hormone receptor family. NR6 subfamily. Homodimer. Interacts with UIMC1. Expressed in the germ cells of both the adult testis and ovary, being most abundant in spermatids.

The protein localises to the nucleus. Its function is as follows. Orphan nuclear receptor that binds to a response element containing the sequence 5'-TCAAGGTCA-3'. Acts as a regulator of embryonic stem cell pluripotency by mediating repression of POU5F1/OCT4: binds to the DR0 element within the POU5F1/OCT4 promoter and inhibits POU5F1/OCT4 expression during embryonic stem cell differentiation. Required to restrict POU5F1/OCT4 expression to the germ cell lineage. Involved in the regulation of gene expression in germ cell development during gametogenesis. The polypeptide is Nuclear receptor subfamily 6 group A member 1 (Nr6a1) (Mus musculus (Mouse)).